The primary structure comprises 380 residues: Acyl-lipid (9+3)-(E)-desaturase (380 aa).

The disordered stretch occupies residues 1–25 (MGAGGCISVSETKPNQKNSLERAPY). Over residues 9–18 (VSETKPNQKN) the composition is skewed to polar residues. A run of 2 helical transmembrane segments spans residues 52 to 72 (LSYV…TTYF) and 81 to 101 (ALAW…VWVI). The Histidine box-1 motif lies at 103-107 (HECGH). Residues 139–143 (HRRHH) carry the Histidine box-2 motif. 3 consecutive transmembrane segments (helical) span residues 177–197 (IGVL…FNVS), 223–243 (IYLS…AAMV), and 247–267 (VWLI…LVLV). The Histidine box-3 motif lies at 313–317 (HIVHH).

Belongs to the fatty acid desaturase type 1 family.

Its subcellular location is the membrane. It catalyses the reaction a (9Z)-octadecenoyl-containing glycerolipid + 2 Fe(II)-[cytochrome b5] + O2 + 2 H(+) = a (9Z,12E)-octadecadienoyl-containing glycerolipid + 2 Fe(III)-[cytochrome b5] + 2 H2O. The enzyme catalyses a (9Z)-hexadecenoyl-containing glycerolipid + 2 Fe(II)-[cytochrome b5] + O2 + 2 H(+) = a (9Z,12E)-hexadecadienoyl-containing glycerolipid + 2 Fe(III)-[cytochrome b5] + 2 H2O. Functionally, involved in the biosynthesis of dimorphecolic acid (9-OH-18:2(10E,12E)). Converts oleic acid (18:1(9Z)) into 18:2(9Z,12E) and probably palmitoleic acid (16:1(9Z)) into 16:2(9Z,12E). Very limited ability to catalyze (Z)-delta(12) desaturation. This Dimorphotheca sinuata (African daisy) protein is Acyl-lipid (9+3)-(E)-desaturase.